Reading from the N-terminus, the 322-residue chain is Ribose 1,5-bisphosphate isomerase (322 aa).

Residues 20–23 (RGAG) and Arg63 contribute to the substrate site. Cys133 functions as the Proton acceptor in the catalytic mechanism. 135–137 (SKA) serves as a coordination point for substrate. Residue Asp202 is the Proton donor of the active site. Substrate is bound by residues 212–213 (NK) and Lys238.

This sequence belongs to the eIF-2B alpha/beta/delta subunits family. R15P isomerase subfamily. In terms of assembly, homohexamer; trimer of dimers.

The catalysed reaction is alpha-D-ribose 1,5-bisphosphate = D-ribulose 1,5-bisphosphate. With respect to regulation, is highly activated in the presence of AMP, with an increase of &gt;40-fold in activity levels. Among other nucleotides, isomerase activity is slightly increased in the presence of GMP, but CMP, UMP, TMP, and NAD(+) have no effect; therefore, AMP is likely the major activator of R15P isomerase in vivo. To a lesser extent, various compounds with an adenosyl moiety, such as dAMP, adenosine, or methylthioadenosine, can also act as activators. The regulation of this enzyme by AMP prevents excess degradation of intracellular AMP by the archaeal AMP degradation pathway. Its function is as follows. Catalyzes the isomerization of ribose 1,5-bisphosphate (R15P) to ribulose 1,5-bisphosphate (RuBP), the CO(2) acceptor and substrate for RubisCO. Only accepts the alpha-anomer of D-ribose 1,5-bisphosphate as substrate, being inactive on the beta-anomer. Displays a strict substrate specificity, since other phosphorylated sugars such as R5P, ribose, G16P, G6P, G1P, FBP, F6P, and PRPP, are not substrates. Functions in an archaeal AMP degradation pathway, together with AMP phosphorylase and RubisCO. The protein is Ribose 1,5-bisphosphate isomerase of Thermococcus kodakarensis (strain ATCC BAA-918 / JCM 12380 / KOD1) (Pyrococcus kodakaraensis (strain KOD1)).